Here is a 1133-residue protein sequence, read N- to C-terminus: Nuclear pore complex-interacting protein family member B5 (1133 aa).

The helical transmembrane segment at 60–84 (WLHVIIAFPTSYKVVITLWIVYLWV) threads the bilayer. Disordered regions lie at residues 241–262 (NRMG…NSLS), 290–575 (LTPL…IKTP), and 868–1133 (ERLR…RRLS). Residues 252 to 262 (QQHSITDNSLS) show a composition bias toward polar residues. The segment covering 349 to 359 (PLPPSALPSAP) has biased composition (pro residues). 7 stretches are compositionally biased toward basic and acidic residues: residues 406 to 416 (DNIKTPAERLR), 448 to 458 (DNIKTPAERLR), 490 to 500 (DNIKTPAERLR), 528 to 538 (DNIKTPAERLR), 903 to 913 (DNIKTPAERLR), 945 to 955 (DNIKTPAERLR), and 987 to 997 (DNIKTPAERLR).

Belongs to the NPIP family.

The protein resides in the membrane. The protein is Nuclear pore complex-interacting protein family member B5 (NPIPB5) of Homo sapiens (Human).